The sequence spans 349 residues: C-X-C chemokine receptor type 1 (349 aa).

Residues 1–44 are Extracellular-facing; the sequence is MAEAEYFIWIAPEGDFEEEFGNITRMLPTGEYFSPCKRVPMTNR. The N-linked (GlcNAc...) asparagine glycan is linked to Asn22. A helical membrane pass occupies residues 45-71; that stretch reads QAVVVFYALVFLLSLLGNSLVMLVILY. The Cytoplasmic segment spans residues 72-80; it reads RRRTRSVTD. A helical membrane pass occupies residues 81-101; sequence VYVLNLAIADLLFSLTLPFLA. Topologically, residues 102 to 116 are extracellular; that stretch reads VSKWKGWIFGTPLCK. A disulfide bridge connects residues Cys115 and Cys192. The chain crosses the membrane as a helical span at residues 117–138; sequence MVSLLKEVNFFSGILLLACISV. Residues 139–159 are Cytoplasmic-facing; that stretch reads DRYLAIVHATRTLTRKRYLVK. A helical transmembrane segment spans residues 160 to 179; it reads FVCMGTWGLSLVLSLPFAIF. The Extracellular portion of the chain corresponds to 180 to 204; sequence RQAYKPYRSGTVCYEVLGEATADLR. A helical membrane pass occupies residues 205–225; it reads ITLRGLSHIFGFLLPLFIMLV. Residues 226–247 lie on the Cytoplasmic side of the membrane; it reads CYGLTLRTLFKAHMRQKRRAMW. The helical transmembrane segment at 248–269 threads the bilayer; it reads VIFAVVLVFLLCCLPYNLVLLS. The Extracellular segment spans residues 270–290; the sequence is DTLLGAHLIQDTCERRNNIDQ. Residues 291–313 traverse the membrane as a helical segment; the sequence is ALYITEILGFSHSCLNPVIYAFV. Over 314 to 349 the chain is Cytoplasmic; it reads GQSFRHEFLKILANLVHKEVLTHHSASFRTSLTTIY.

Belongs to the G-protein coupled receptor 1 family. As to quaternary structure, interacts with IL8. Interacts with GNAI2.

It is found in the cell membrane. Its function is as follows. Receptor to interleukin-8, which is a powerful neutrophils chemotactic factor. Binding of IL-8 to the receptor causes activation of neutrophils. This response is mediated via a G-protein that activates a phosphatidylinositol-calcium second messenger system. This Rattus norvegicus (Rat) protein is C-X-C chemokine receptor type 1 (Cxcr1).